Consider the following 623-residue polypeptide: Leucine aminopeptidase 2 (623 aa).

Residues 1–23 are disordered; the sequence is MRRCTKNSRSTNPPRDPNTLSNY. Residues 7–23 show a composition bias toward polar residues; the sequence is NSRSTNPPRDPNTLSNY. A peptide-binding positions include 145-147 and 277-282; these read QCQ and PYGGME. His306 contacts Zn(2+). Residue Glu307 is the Proton acceptor of the active site. Positions 310 and 329 each coordinate Zn(2+). Residue Tyr394 is the Proton donor of the active site.

This sequence belongs to the peptidase M1 family. Zn(2+) is required as a cofactor.

It localises to the cytoplasm. Its subcellular location is the nucleus. The catalysed reaction is an epoxide + H2O = an ethanediol. Its function is as follows. Aminopeptidase that preferentially cleaves di- and tripeptides. Also has low epoxide hydrolase activity (in vitro). Can hydrolyze the epoxide leukotriene LTA(4) but it forms preferentially 5,6-dihydroxy-7,9,11,14-eicosatetraenoic acid rather than the cytokine leukotriene B(4) as the product compared to the homologous mammalian enzyme (in vitro). This is Leucine aminopeptidase 2 from Ajellomyces capsulatus (strain NAm1 / WU24) (Darling's disease fungus).